Here is a 365-residue protein sequence, read N- to C-terminus: MEPMESCSVPPGFRFHPTDEELVGYYLRKKIASQKIDLDVIRDIDLYRIEPWDLQEQCRIGYEEQNEWYFFSHKDKKYPTGTRTNRATMAGFWKATGRDKAVYDKTKLIGMRKTLVFYKGRAPNGKKSDWIMHEYRLESDENAPPQEEGWVVCRAFKKRATGQAKNTETWSSSYFYDEVAPNGVNSVMDPIDYISKQQHNIFGKGLMCKQELEGMVDGINYIQSNQFIQLPQLQSPSLPLMKRPSSSMSITSMDNNYNYKLPLADEESFESFIRGEDRRKKKKQVMMTGNWRELDKFVASQLMSQEDNGTSSFAGHHIVNEDKNNNDVEMDSSMFLSEREEENRFVSEFLSTNSDYDIGICVFDN.

Residues 9-158 (VPPGFRFHPT…GWVVCRAFKK (150 aa)) form the NAC domain. A DNA-binding region spans residues 109–164 (IGMRKTLVFYKGRAPNGKKSDWIMHEYRLESDENAPPQEEGWVVCRAFKKRATGQA).

The protein belongs to the plant vascular related NAC-domain protein family. In terms of assembly, interacts with NAC030/VND7. In terms of tissue distribution, expressed in root metaxylem pole and in shoot pre-procambium and procambium. Present in root developing xylems. Specifically expressed in vessels but not in interfascicular fibers in stems.

The protein localises to the nucleus. In terms of biological role, transcription activator that binds to the secondary wall NAC binding element (SNBE), 5'-(T/A)NN(C/T)(T/C/G)TNNNNNNNA(A/C)GN(A/C/T)(A/T)-3', in the promoter of target genes. Involved in xylem formation by promoting the expression of secondary wall-associated transcription factors and of genes involved in secondary wall biosynthesis and programmed cell death, genes driven by the secondary wall NAC binding element (SNBE). Triggers thickening of secondary walls. This Arabidopsis thaliana (Mouse-ear cress) protein is NAC domain-containing protein 37.